We begin with the raw amino-acid sequence, 419 residues long: Peptide chain release factor subunit 1 (419 aa).

Belongs to the eukaryotic release factor 1 family. Heterodimer of two subunits, one of which binds GTP.

The protein localises to the cytoplasm. Its function is as follows. Directs the termination of nascent peptide synthesis (translation) in response to the termination codons UAA, UAG and UGA. This chain is Peptide chain release factor subunit 1, found in Methanococcus maripaludis (strain C5 / ATCC BAA-1333).